The sequence spans 177 residues: NAD(P)H-quinone oxidoreductase subunit 6, chloroplastic (177 aa).

The next 5 membrane-spanning stretches (helical) occupy residues 10-30, 32-52, 61-81, 92-112, and 152-172; these read FLLVFLGLGFIMGGLGVVLLT, PIFSAFSLGLVLVCTSLFYTP, AQLLIYVGAINVLIIFAVMFM, LWTVGDGVTSLVCTSIFVSLI, and FFLPFELISIILLVALIGAIS.

It belongs to the complex I subunit 6 family. In terms of assembly, NDH is composed of at least 16 different subunits, 5 of which are encoded in the nucleus.

Its subcellular location is the plastid. It is found in the chloroplast thylakoid membrane. The enzyme catalyses a plastoquinone + NADH + (n+1) H(+)(in) = a plastoquinol + NAD(+) + n H(+)(out). The catalysed reaction is a plastoquinone + NADPH + (n+1) H(+)(in) = a plastoquinol + NADP(+) + n H(+)(out). In terms of biological role, NDH shuttles electrons from NAD(P)H:plastoquinone, via FMN and iron-sulfur (Fe-S) centers, to quinones in the photosynthetic chain and possibly in a chloroplast respiratory chain. The immediate electron acceptor for the enzyme in this species is believed to be plastoquinone. Couples the redox reaction to proton translocation, and thus conserves the redox energy in a proton gradient. The protein is NAD(P)H-quinone oxidoreductase subunit 6, chloroplastic (ndhG) of Ranunculus macranthus (Large buttercup).